Consider the following 239-residue polypeptide: Increased recombination centers protein 22-1 (239 aa).

Positions M1–G19 are cleaved as a signal peptide. Topologically, residues Y20–L161 are lumenal. A helical transmembrane segment spans residues I162–I182. Topologically, residues W183 to N239 are cytoplasmic. A compositionally biased stretch (low complexity) spans A201–S213. Positions A201–T222 are disordered.

This sequence belongs to the IRC22 family.

It localises to the endoplasmic reticulum membrane. Functionally, is probably involved in a pathway contributing to genomic integrity. This Candida albicans (strain WO-1) (Yeast) protein is Increased recombination centers protein 22-1 (IRC22-1).